A 315-amino-acid chain; its full sequence is tRNA dimethylallyltransferase (315 aa).

10 to 17 (GPTATGKS) provides a ligand contact to ATP. A substrate-binding site is contributed by 12–17 (TATGKS). Residues 35–38 (DSMQ) are interaction with substrate tRNA.

It belongs to the IPP transferase family. In terms of assembly, monomer. It depends on Mg(2+) as a cofactor.

It catalyses the reaction adenosine(37) in tRNA + dimethylallyl diphosphate = N(6)-dimethylallyladenosine(37) in tRNA + diphosphate. Its function is as follows. Catalyzes the transfer of a dimethylallyl group onto the adenine at position 37 in tRNAs that read codons beginning with uridine, leading to the formation of N6-(dimethylallyl)adenosine (i(6)A). The chain is tRNA dimethylallyltransferase from Caldanaerobacter subterraneus subsp. tengcongensis (strain DSM 15242 / JCM 11007 / NBRC 100824 / MB4) (Thermoanaerobacter tengcongensis).